Here is a 120-residue protein sequence, read N- to C-terminus: UPF0231 protein YacL (120 aa).

It belongs to the UPF0231 family.

This chain is UPF0231 protein YacL, found in Escherichia coli (strain SMS-3-5 / SECEC).